The primary structure comprises 197 residues: MNFLLLLLAAYALGSTPFAIVSSRLFGLADPRRYGSGNPGATNVLRSGNKAAALLTLVGDCAKGWLAVWGAAKLGFSPVEAALAGLAAFLGHVFSVFLRFRGGKGVATALGVLAGINAWVALSALFVWLAVAVLTRYSSAAALAAAVITPISGAVLLGATPTVAVLALIAGILVWRHAPNIRKLMNGSESKIGASKS.

The next 4 helical transmembrane spans lie at 1-21 (MNFLLLLLAAYALGSTPFAIV), 78-98 (PVEAALAGLAAFLGHVFSVFL), 112-132 (VLAGINAWVALSALFVWLAVA), and 155-175 (VLLGATPTVAVLALIAGILVW).

This sequence belongs to the PlsY family. In terms of assembly, probably interacts with PlsX.

The protein resides in the cell inner membrane. The catalysed reaction is an acyl phosphate + sn-glycerol 3-phosphate = a 1-acyl-sn-glycero-3-phosphate + phosphate. Its pathway is lipid metabolism; phospholipid metabolism. In terms of biological role, catalyzes the transfer of an acyl group from acyl-phosphate (acyl-PO(4)) to glycerol-3-phosphate (G3P) to form lysophosphatidic acid (LPA). This enzyme utilizes acyl-phosphate as fatty acyl donor, but not acyl-CoA or acyl-ACP. In Aromatoleum aromaticum (strain DSM 19018 / LMG 30748 / EbN1) (Azoarcus sp. (strain EbN1)), this protein is Glycerol-3-phosphate acyltransferase.